Consider the following 126-residue polypeptide: Fluoride-specific ion channel FluC (126 aa).

4 consecutive transmembrane segments (helical) span residues F5 to I25, T39 to V59, I69 to T89, and A103 to V123. 2 residues coordinate Na(+): G77 and T80.

Belongs to the fluoride channel Fluc/FEX (TC 1.A.43) family.

It is found in the cell inner membrane. It carries out the reaction fluoride(in) = fluoride(out). With respect to regulation, na(+) is not transported, but it plays an essential structural role and its presence is essential for fluoride channel function. Its function is as follows. Fluoride-specific ion channel. Important for reducing fluoride concentration in the cell, thus reducing its toxicity. The polypeptide is Fluoride-specific ion channel FluC (Nitrobacter winogradskyi (strain ATCC 25391 / DSM 10237 / CIP 104748 / NCIMB 11846 / Nb-255)).